The sequence spans 738 residues: Polyphosphate kinase (738 aa).

The interval 1 to 48 (MIGNDRWVTEIETGPVTEARPDTNAREPGDRTPAAPPAATPAATTDQL) is disordered. Over residues 19–30 (ARPDTNAREPGD) the composition is skewed to basic and acidic residues. N91 is a binding site for ATP. Mg(2+) contacts are provided by R427 and R457. H487 functions as the Phosphohistidine intermediate in the catalytic mechanism. Y520, R620, and H648 together coordinate ATP.

It belongs to the polyphosphate kinase 1 (PPK1) family. Mg(2+) serves as cofactor. Post-translationally, an intermediate of this reaction is the autophosphorylated ppk in which a phosphate is covalently linked to a histidine residue through a N-P bond.

It carries out the reaction [phosphate](n) + ATP = [phosphate](n+1) + ADP. In terms of biological role, catalyzes the reversible transfer of the terminal phosphate of ATP to form a long-chain polyphosphate (polyP). This Mycobacterium marinum (strain ATCC BAA-535 / M) protein is Polyphosphate kinase.